Reading from the N-terminus, the 279-residue chain is Probable nicotinate-nucleotide pyrophosphorylase [carboxylating] (279 aa).

Residues R90, T125 to K127, R149, K159, E189, D210, S238 to G240, and M259 to F261 contribute to the substrate site.

The protein belongs to the NadC/ModD family. Hexamer formed by 3 homodimers.

The catalysed reaction is nicotinate beta-D-ribonucleotide + CO2 + diphosphate = quinolinate + 5-phospho-alpha-D-ribose 1-diphosphate + 2 H(+). The protein operates within cofactor biosynthesis; NAD(+) biosynthesis; nicotinate D-ribonucleotide from quinolinate: step 1/1. Involved in the catabolism of quinolinic acid (QA). The chain is Probable nicotinate-nucleotide pyrophosphorylase [carboxylating] (nadC) from Methanothermobacter thermautotrophicus (strain ATCC 29096 / DSM 1053 / JCM 10044 / NBRC 100330 / Delta H) (Methanobacterium thermoautotrophicum).